The primary structure comprises 492 residues: MAQFCILGVLLILSGTHCSWGFHEETHYPCAFIDTANITGSYGLDGPFVHNWTVIPRHFVAVYDFVIENGIRIPASRHLRACVCKTKPCVRICCLRGEIYDLEKRQCLVPVAGVSSLPSHSHMEVELGNGSLRLVKLQPRFSIHVETPCEHMKAVTKGSEYVHWTLHENGTISHRGHIFSKHYCFTPLLHGNSTWEWQPLACAPEKLYFVLGVREWTYAICLLIAILSMFIVLMVYLMCSEMRNSFYGVAIKAYAICMILGYALLAYLTLHNPANLSNAACRILPSLALMNLVLSFYILSFIAFKLYLSFYGVVFTKLMFWLIFTPIVLVAVGWSFFVGFSYYGSRLIFGGDTCWFDPRNWSVMIYFYAPVFVACAISGFFYVLSQIYIRDQPDIETEKSFESIEKNRFKSFWKYFGYTAVVWVVCICSFAFNYYWENRSHLNYAVSFCMAFHGFAALYALIGKNQQIQNFLRRIDNGEDTCENSVPLSSFG.

Residues 1 to 21 (MAQFCILGVLLILSGTHCSWG) form the signal peptide. Residues 22-218 (FHEETHYPCA…FVLGVREWTY (197 aa)) are Extracellular-facing. 4 cysteine pairs are disulfide-bonded: cysteine 30/cysteine 82, cysteine 84/cysteine 89, cysteine 93/cysteine 184, and cysteine 94/cysteine 107. N-linked (GlcNAc...) asparagine glycosylation is found at asparagine 37 and asparagine 51. N-linked (GlcNAc...) asparagine glycosylation is found at asparagine 129, asparagine 169, and asparagine 192. Residues 219-239 (AICLLIAILSMFIVLMVYLMC) traverse the membrane as a helical segment. The Cytoplasmic segment spans residues 240 to 245 (SEMRNS). Residues 246 to 266 (FYGVAIKAYAICMILGYALLA) form a helical membrane-spanning segment. The Extracellular segment spans residues 267–282 (YLTLHNPANLSNAACR). N-linked (GlcNAc...) asparagine glycosylation is present at asparagine 275. The chain crosses the membrane as a helical span at residues 283-303 (ILPSLALMNLVLSFYILSFIA). Residues 304–317 (FKLYLSFYGVVFTK) lie on the Cytoplasmic side of the membrane. The chain crosses the membrane as a helical span at residues 318 to 338 (LMFWLIFTPIVLVAVGWSFFV). The Extracellular segment spans residues 339–362 (GFSYYGSRLIFGGDTCWFDPRNWS). The N-linked (GlcNAc...) asparagine glycan is linked to asparagine 360. The helical transmembrane segment at 363 to 383 (VMIYFYAPVFVACAISGFFYV) threads the bilayer. Residues 384–411 (LSQIYIRDQPDIETEKSFESIEKNRFKS) are Cytoplasmic-facing. Residues 412 to 432 (FWKYFGYTAVVWVVCICSFAF) traverse the membrane as a helical segment. Residues 433 to 441 (NYYWENRSH) are Extracellular-facing. Residue asparagine 438 is glycosylated (N-linked (GlcNAc...) asparagine). A helical membrane pass occupies residues 442–462 (LNYAVSFCMAFHGFAALYALI). Over 463 to 492 (GKNQQIQNFLRRIDNGEDTCENSVPLSSFG) the chain is Cytoplasmic.

Belongs to the G-protein coupled receptor 2 family. Mth subfamily.

The protein localises to the cell membrane. In Drosophila melanogaster (Fruit fly), this protein is Probable G-protein coupled receptor Mth-like 8 (mthl8).